Here is a 136-residue protein sequence, read N- to C-terminus: Large ribosomal subunit protein bL17 (136 aa).

This sequence belongs to the bacterial ribosomal protein bL17 family. As to quaternary structure, part of the 50S ribosomal subunit. Contacts protein L32.

The polypeptide is Large ribosomal subunit protein bL17 (Akkermansia muciniphila (strain ATCC BAA-835 / DSM 22959 / JCM 33894 / BCRC 81048 / CCUG 64013 / CIP 107961 / Muc)).